The sequence spans 358 residues: Protein ocs (358 aa).

This sequence belongs to the lysopine/nopaline/octopine/opine/vitopine dehydrogenases family.

The catalysed reaction is D-octopine + NAD(+) + H2O = L-arginine + pyruvate + NADH + H(+). The enzyme catalyses D-lysopine + NADP(+) + H2O = L-lysine + pyruvate + NADPH + H(+). Functionally, reductive condensation of pyruvate and arginine, lysine, histidine, or octopine to form octopine, lysopine, histopine, or octopinic acid, respectively. NADPH is the preferred cofactor, but NADH can also be used. The protein is Protein ocs (ocs) of Agrobacterium vitis (Rhizobium vitis).